A 429-amino-acid chain; its full sequence is Adenylosuccinate synthetase (429 aa).

Residues 12–18 (GDEGKGK) and 40–42 (GHT) each bind GTP. Asp13 (proton acceptor) is an active-site residue. Residues Asp13 and Gly40 each coordinate Mg(2+). IMP is bound by residues 13-16 (DEGK), 38-41 (NAGH), Thr128, Arg142, Gln223, Thr238, and Arg302. Catalysis depends on His41, which acts as the Proton donor. 298–304 (VNTGRPR) lines the substrate pocket. Residues Arg304, 330–332 (KLD), and 412–414 (GVG) each bind GTP.

This sequence belongs to the adenylosuccinate synthetase family. Homodimer. The cofactor is Mg(2+).

The protein localises to the cytoplasm. It catalyses the reaction IMP + L-aspartate + GTP = N(6)-(1,2-dicarboxyethyl)-AMP + GDP + phosphate + 2 H(+). It participates in purine metabolism; AMP biosynthesis via de novo pathway; AMP from IMP: step 1/2. Its function is as follows. Plays an important role in the de novo pathway of purine nucleotide biosynthesis. Catalyzes the first committed step in the biosynthesis of AMP from IMP. This is Adenylosuccinate synthetase from Renibacterium salmoninarum (strain ATCC 33209 / DSM 20767 / JCM 11484 / NBRC 15589 / NCIMB 2235).